Consider the following 257-residue polypeptide: Transmembrane protein C257L (257 aa).

Transmembrane regions (helical) follow at residues 123–143 and 163–183; these read LELLGYSPTSLIGGDLMFTAL and MMIFFLIILLCIILGIFYVLV.

Belongs to the asfivirus C257R family.

The protein resides in the host membrane. Its subcellular location is the virion. This Ornithodoros (relapsing fever ticks) protein is Transmembrane protein C257L.